The chain runs to 169 residues: Peptide methionine sulfoxide reductase MsrA (169 aa).

Cys-10 is a catalytic residue.

Belongs to the MsrA Met sulfoxide reductase family.

The catalysed reaction is L-methionyl-[protein] + [thioredoxin]-disulfide + H2O = L-methionyl-(S)-S-oxide-[protein] + [thioredoxin]-dithiol. It carries out the reaction [thioredoxin]-disulfide + L-methionine + H2O = L-methionine (S)-S-oxide + [thioredoxin]-dithiol. Has an important function as a repair enzyme for proteins that have been inactivated by oxidation. Catalyzes the reversible oxidation-reduction of methionine sulfoxide in proteins to methionine. The protein is Peptide methionine sulfoxide reductase MsrA of Streptococcus pyogenes serotype M28 (strain MGAS6180).